Reading from the N-terminus, the 545-residue chain is MMGHRPVLVLSQNTKRESGRKVQSGNINAAKTIADIIRTCLGPKSMMKMLLDPMGGIVMTNDGNAILREIQVQHPAAKSMIEISRTQDEEVGDGTTSVIILAGEMLSVAEHFLEQQMHPTVVISAYRKALDDMISTLKKISIPVDTSNRDTMLNIINSSITTKVISRWSSLACNIALDAVKTVQFEENGRKEIDIKKYARVEKIPGGIIEDSCVLRGVMINKDVTHPRMRRYIKNPRIVLLDSSLEYKKGESQTDIEITREEDFTRILQMEEEYIQQLCEDIIQLKPDVVITEKGISDLAQHYLMRANITAIRRVRKTDNNRIARACGARIVSRPEELREEDVGTGAGLLEIKKIGDEYFTFITECKDPKACTILLRGASKEILSEVERNLQDAMQVCRNVLLDPQLVPGGGASEMAVAHALTEKSKAMTGVEQWPYRAVAQALEVIPRTLIQNCGASTIRLLTSLRAKHTQENCETWGVNGETGTLVDMKELGIWEPLAVKLQTYKTAVETAVLLLRIDDIVSGHKKKGDDQSRQGGAPDAGQE.

The residue at position 1 (Met-1) is an N-acetylmethionine. The segment at 1-24 (MMGHRPVLVLSQNTKRESGRKVQS) is disordered. A Phosphoserine modification is found at Ser-11. A Glycyl lysine isopeptide (Lys-Gly) (interchain with G-Cter in SUMO2) cross-link involves residue Lys-15. Gly-42 contacts ADP. Gly-42 is a binding site for ATP. Asp-93 lines the Mg(2+) pocket. ADP is bound by residues Gly-94, Thr-95, Thr-96, Ser-97, Thr-162, and Lys-163. Gly-94, Thr-95, and Thr-96 together coordinate ATP. Ser-170 bears the Phosphoserine mark. Lys-222 is subject to N6-acetyllysine. Phosphoserine occurs at positions 243 and 244. Tyr-247 carries the post-translational modification Phosphotyrosine. Residues Lys-248 and Lys-249 each participate in a glycyl lysine isopeptide (Lys-Gly) (interchain with G-Cter in SUMO2) cross-link. The residue at position 252 (Ser-252) is a Phosphoserine. Cys-366 and Cys-372 form a disulfide bridge. Lys-381 participates in a covalent cross-link: Glycyl lysine isopeptide (Lys-Gly) (interchain with G-Cter in SUMO2). Gly-411 is a binding site for ADP. An ATP-binding site is contributed by Gly-411. Thr-430 and Thr-459 each carry phosphothreonine. 4 residues coordinate ADP: Gly-482, Glu-483, Glu-497, and Lys-502. ATP is bound at residue Gly-482. Glu-497 contributes to the ATP binding site. The tract at residues 526 to 545 (HKKKGDDQSRQGGAPDAGQE) is disordered.

The protein belongs to the TCP-1 chaperonin family. In terms of assembly, component of the chaperonin-containing T-complex (TRiC), a hexadecamer composed of two identical back-to-back stacked rings enclosing a protein folding chamber. Each ring is made up of eight different subunits: TCP1/CCT1, CCT2, CCT3, CCT4, CCT5, CCT6A/CCT6, CCT7, CCT8. Interacts with PACRG. Interacts with DNAAF4. Interacts with DLEC1.

The protein resides in the cytoplasm. It catalyses the reaction ATP + H2O = ADP + phosphate + H(+). Functionally, component of the chaperonin-containing T-complex (TRiC), a molecular chaperone complex that assists the folding of actin, tubulin and other proteins upon ATP hydrolysis. The TRiC complex mediates the folding of WRAP53/TCAB1, thereby regulating telomere maintenance. As part of the TRiC complex may play a role in the assembly of BBSome, a complex involved in ciliogenesis regulating transports vesicles to the cilia. The protein is T-complex protein 1 subunit gamma (CCT3) of Bos taurus (Bovine).